The primary structure comprises 314 residues: Endolytic peptidoglycan transglycosylase RlpA (314 aa).

The N-terminal stretch at 1–19 (MGWALKKVCFLGVIFLISA) is a signal peptide. Cysteine 20 is lipidated: N-palmitoyl cysteine. Cysteine 20 carries the S-diacylglycerol cysteine lipid modification. The SPOR domain occupies 241–314 (SVSGGKFSLQ…YNQNAVLTRE (74 aa)).

Belongs to the RlpA family.

Its subcellular location is the cell membrane. In terms of biological role, lytic transglycosylase with a strong preference for naked glycan strands that lack stem peptides. The sequence is that of Endolytic peptidoglycan transglycosylase RlpA from Helicobacter pylori (strain J99 / ATCC 700824) (Campylobacter pylori J99).